The chain runs to 35 residues: Small toxic polypeptide LdrD (35 aa).

Residues 10-32 (FWHDLAAPVIAGILASMIVNWLN) form a helical membrane-spanning segment.

This sequence belongs to the Ldr toxic peptide family.

The protein resides in the cell inner membrane. Its function is as follows. Toxic component of a type I toxin-antitoxin (TA) system. Overexpression causes rapid cell killing and nucleoid condensation of the host cell. Overexpression induces stress-response and a number of membrane protein genes. May inhibit ATP synthesis due to its insertion in the cell inner membrane. This is Small toxic polypeptide LdrD (ldrD) from Escherichia coli (strain K12).